The primary structure comprises 392 residues: Immunoglobulin-binding protein EibA (392 aa).

A signal peptide spans 1-27 (MSKKFTKAVLSAAMAGVLFGVSFDIMA). Positions 28–301 (AEQSYSALNA…IAANTRTLQQ (274 aa)) are surface exposed passenger domain. The Extracellular portion of the chain corresponds to 28-341 (AEQSYSALNA…GLFQPYSVGK (314 aa)). Positions 174–215 (ESANSTIVANELEAQKGKLDAQKGELEAQKKNLGELTTRTDK) form a coiled coil. Residues 187–230 (AQKGKLDAQKGELEAQKKNLGELTTRTDKIDAAAAATAAKVESR) are right-handed coiled-coil (RHcc). The segment at 231 to 256 (TLVGVSSDGTLTRAEGAKNTISVNDG) is saddle domain. The segment at 257–322 (LVALSGRTDR…INENHKEMKR (66 aa)) is left-handed coiled-coil (LHcc). Positions 299-341 (LQQHSARLDSQQRQINENHKEMKRAAAQSAALTGLFQPYSVGK) are outer membrane translocation of the passenger domain. 4 beta stranded membrane-spanning segments follow: residues 342–352 (FNASAAVGGYS), 355–366 (QALAVGVGYRFN), 369–378 (TAAKAGVAFS), and 382–392 (ASWNVGVNFEF). Positions 342-392 (FNASAAVGGYSDEQALAVGVGYRFNEQTAAKAGVAFSDGDASWNVGVNFEF) are translocator domain.

The protein belongs to the autotransporter-2 (AT-2) (TC 1.B.40) family. Eib subfamily. As to quaternary structure, homotrimer; can probably form mixed heterotrimers in vivo. Will form mixed heterotrimers with EibD; these are correctly located in the outer membrane and bind IgG Fc, although less well than homotrimers. Does not form trimers with distantly related YadA from Y.enterocolitica; coexpression was lethal and one of the genes is eliminated in vivo. If the full translocator domain (299-392) is exchanged with that of YadA ('368-455'), will form heterotrimers with YadA and vice-versa. In denaturing gels runs as 2 bands of about 121 and 131 kDa; extracting the sample with 88% phenol at 70 degrees Celsius reduces part of the signal to about 45 kDa. Binds the Fc portion of IgG; binds more than 1 Fc per subunit.

Its subcellular location is the cell surface. The protein resides in the cell outer membrane. Binds (in a non-immune fashion) to the Fc portion of human IgG but not IgA; binding occurs on the cell surface. Confers the ability to survive exposure to human serum exposure. Binds to the Fc portion of human IgG and to whole mouse antibodies also via Fc, binds more than 1 Fc or IgG. The chain is Immunoglobulin-binding protein EibA from Escherichia coli.